A 955-amino-acid chain; its full sequence is 2-oxoglutarate dehydrogenase E1 component (955 aa).

Belongs to the alpha-ketoglutarate dehydrogenase family. In terms of assembly, homodimer. Part of the 2-oxoglutarate dehydrogenase (OGDH) complex composed of E1 (2-oxoglutarate dehydrogenase), E2 (dihydrolipoamide succinyltransferase) and E3 (dihydrolipoamide dehydrogenase); the complex contains multiple copies of the three enzymatic components (E1, E2 and E3). Requires thiamine diphosphate as cofactor.

It carries out the reaction N(6)-[(R)-lipoyl]-L-lysyl-[protein] + 2-oxoglutarate + H(+) = N(6)-[(R)-S(8)-succinyldihydrolipoyl]-L-lysyl-[protein] + CO2. Its function is as follows. E1 component of the 2-oxoglutarate dehydrogenase (OGDH) complex which catalyzes the decarboxylation of 2-oxoglutarate, the first step in the conversion of 2-oxoglutarate to succinyl-CoA and CO(2). The polypeptide is 2-oxoglutarate dehydrogenase E1 component (Bacillus cereus (strain ZK / E33L)).